Here is a 416-residue protein sequence, read N- to C-terminus: Leu/Ile/Val-binding protein homolog 4 (416 aa).

Positions 1–26 are cleaved as a signal peptide; the sequence is MSLKVFLQAGVACAALSLAGAAGASA.

This sequence belongs to the leucine-binding protein family.

Component of an amino-acid transport system. This chain is Leu/Ile/Val-binding protein homolog 4, found in Brucella melitensis biotype 1 (strain ATCC 23456 / CCUG 17765 / NCTC 10094 / 16M).